Reading from the N-terminus, the 186-residue chain is Elongation factor P (186 aa).

The protein belongs to the elongation factor P family.

It is found in the cytoplasm. The protein operates within protein biosynthesis; polypeptide chain elongation. In terms of biological role, involved in peptide bond synthesis. Stimulates efficient translation and peptide-bond synthesis on native or reconstituted 70S ribosomes in vitro. Probably functions indirectly by altering the affinity of the ribosome for aminoacyl-tRNA, thus increasing their reactivity as acceptors for peptidyl transferase. The sequence is that of Elongation factor P from Streptococcus thermophilus (strain CNRZ 1066).